The following is a 180-amino-acid chain: NADH-quinone oxidoreductase subunit I (180 aa).

2 4Fe-4S ferredoxin-type domains span residues 50–80 and 90–119; these read LTRD…LQKA and EFFR…LTPD. Positions 60, 63, 66, 70, 99, 102, 105, and 109 each coordinate [4Fe-4S] cluster.

The protein belongs to the complex I 23 kDa subunit family. As to quaternary structure, NDH-1 is composed of 13 different subunits. Subunits NuoA, H, J, K, L, M, N constitute the membrane sector of the complex. The cofactor is [4Fe-4S] cluster.

It is found in the cell inner membrane. The enzyme catalyses a quinone + NADH + 5 H(+)(in) = a quinol + NAD(+) + 4 H(+)(out). NDH-1 shuttles electrons from NADH, via FMN and iron-sulfur (Fe-S) centers, to quinones in the respiratory chain. The immediate electron acceptor for the enzyme in this species is believed to be ubiquinone. Couples the redox reaction to proton translocation (for every two electrons transferred, four hydrogen ions are translocated across the cytoplasmic membrane), and thus conserves the redox energy in a proton gradient. This Yersinia enterocolitica serotype O:8 / biotype 1B (strain NCTC 13174 / 8081) protein is NADH-quinone oxidoreductase subunit I.